The chain runs to 364 residues: Dihydroorotate dehydrogenase (quinone) (364 aa).

FMN contacts are provided by residues 62–66 (AGFDK) and threonine 86. Substrate is bound at residue lysine 66. 111 to 115 (NRMGF) serves as a coordination point for substrate. Residues asparagine 142 and asparagine 175 each coordinate FMN. Residue asparagine 175 participates in substrate binding. Catalysis depends on serine 178, which acts as the Nucleophile. Asparagine 180 is a substrate binding site. 2 residues coordinate FMN: lysine 216 and threonine 244. A substrate-binding site is contributed by 245-246 (NT). FMN-binding positions include glycine 267, glycine 296, and 317-318 (YT).

This sequence belongs to the dihydroorotate dehydrogenase family. Type 2 subfamily. In terms of assembly, monomer. It depends on FMN as a cofactor.

Its subcellular location is the cell membrane. The enzyme catalyses (S)-dihydroorotate + a quinone = orotate + a quinol. The protein operates within pyrimidine metabolism; UMP biosynthesis via de novo pathway; orotate from (S)-dihydroorotate (quinone route): step 1/1. Catalyzes the conversion of dihydroorotate to orotate with quinone as electron acceptor. The sequence is that of Dihydroorotate dehydrogenase (quinone) from Anaeromyxobacter dehalogenans (strain 2CP-C).